Reading from the N-terminus, the 923-residue chain is Protocadherin gamma-B5 (923 aa).

Positions 1–30 are cleaved as a signal peptide; it reads MGRGTGELGRAERLPVLFLFLLSLFCPALC. 6 Cadherin domains span residues 31–133, 134–242, 243–343, 344–448, 449–558, and 566–671; these read EQIR…TPKF, TQNS…PPVF, NRDV…SPEV, TFHS…APVF, HQAS…APRV, and DGSA…LPDI. The Extracellular segment spans residues 31 to 687; that stretch reads EQIRYRIPEE…SDPQAELQFY (657 aa). N-linked (GlcNAc...) asparagine glycans are attached at residues asparagine 415 and asparagine 541. The helical transmembrane segment at 688 to 708 threads the bilayer; that stretch reads LVVALALISVLFLLAVILAIA. At 709–923 the chain is on the cytoplasmic side; the sequence is LRLRRSSSPA…KKKSGKKEKK (215 aa). Disordered stretches follow at residues 794-832 and 893-923; these read TSHP…WPNN and ATLT…KEKK. Residues 807 to 832 show a composition bias toward polar residues; that stretch reads WRFSQAQRPGTSGSQNGDDTGTWPNN. Residues 913-923 show a composition bias toward basic residues; that stretch reads NKKKSGKKEKK.

It localises to the cell membrane. Functionally, potential calcium-dependent cell-adhesion protein. May be involved in the establishment and maintenance of specific neuronal connections in the brain. The chain is Protocadherin gamma-B5 (PCDHGB5) from Pan troglodytes (Chimpanzee).